The following is a 1863-amino-acid chain: MFSIAAINDTESTEKWEPLAPSKEAQEFHLSQTYHDGLLKLQAKDYDKARELLESILKDPIITNSKVETIANDNHLHHLRFLALKNLATVFLELGSSHYENALNCYLQAIDLDAKDSVLWNHLGTLSCSMGLLSISRWAFEQGLLCSPNNWNCMEKLLEVLIAVGDEVSCLSVANLILRHWPSHSRALHVKHCIEDTDSAPFAPKGIDKLEPQHVRLKFLGKRKVSDMNQDMDATSKKLRKRVQFKLPEASWVALLNILIGIVHPSRETVGISADIPITIELSLSTEAVMQGMKKKDHCVDSDSSNVSVKDCNIERESGGSVKEKEPVFSEEHPQERRSTRLERLRNQKPEKEGLEFDNSKDPSSDILQYLEKFVLKRGFDRESAGSFCNEESDPISEHAVVSNFVKENLENYGAYHMGHLLLEYIANKCEHVLSRETALKILELEKLTRHWGRDRKPECSLFLAELYHDFDSKRSDIPDAPSCMVEVTYHLSKIIESVSLDYAIDSTPSSRGKMFSDSSFKSFQGDEAAKEVLDYDTRSFWARYFWLSARLSILEDNKAKALEEYLRCLSLLGREGIGEAPVLIQRPHCRRVRELTINRIIHEINLLKIDFLLENNIPEMMEKEFYSECVNLLAPLLFPDKDILPAYAVKTEEGISSVELSALEVLIKACQKSKPIDVEVYMNCHRRKLQVLLDSTGTGESVVTPKTSSKNSSESWDHLVAEEVKAILLCISQVKNSLDQSGNSDDMVAPRDCVAGIQALLLRVMSNIVRHFFSKRYSDSQNADGIEEEKKSCFLDAAIGFCKLQHLDATISTKYQVELIIRLHDLLAEYGLCCAGKNCAGEEGAFLRFAIKHLLAVDMKVKSSINSPDGLGHDMGLPDKLCRNEVKSFLEEVHVEKNENNKTESKKDGSEEQVGYREKEQSEQQSKQIPEHTEEVAEEEKDELELLINNALDQCFFCLYGLNLRVDGSYEDELAVHKNTSRGDYQTKEQCVDVFQYILPYAKASSRTGLVKLRRVLRAIKKHFSQPPDDLLIGNVIDKFLDDPELCEDKLSYEAGSEGFLETITKCLIPSRTLSEYKISLLHSSDPYLDVYRNLYFLLAQSEEVSASDKWPGFVLTKEGEEFEQQNTNLFKYDLLYNPLRFESWEKLGNIYDEEVDLLLNDGSKHINVVGWRKNSALSQRVETSRRRSRRCLLMSLALANSPDQQSEIHELLALVYYDSLQSVVPFYDQRSVLPSKDATWTRFCENSMKHFNKAFSHRQDWSHAFYMGKLSEKLGHSYEISLSYYKQAMTLNPSAVDPVYRMHASRLKLLNACGKQNLEALKVLASYCFDESIKDTAMTIIGTTTFGSSRTLEEAQDGNLEACYAKSGEGSIQMEGVWHMLYNDSLSALGICVEGDLKHFHKARYMLAQGLYRRGGSSDLQRAKEELSFCFKSSRSSFTINMWEIDGMVKKGRRKTPGLAGNKKALEVNLPESSRKFITCIRKYLLFYLRLLEETEDVNTLERAFNSLRSDKRFSLCVEDLVPVAIGRYVKALVSSMSRVESAGAIINPDSQLEKIFSLFIEQGSIWPDICNFPETRGPETSESSLYRYLHQYIVSLELDNKVETLETINEKIRKRFKNPKLSNSFSAKVGRHASLAWCRALIISLALITPLQPVSSEESQAITPSFGLLENRRVLCVDLQSEFWSSSFEDPLESQMLEAKWRPVLSKIKNVLIFNKVVEGNLEIANSLLKSCYNFFRETASVTLPSDINLYFALPRLAPAGELLPGNEGVEVIDVSIPRKLLLWAYTLFHGHCGSISQVVKYMEENTKPKMKRGASTSSVVPSVQSGGTSEPEPAPKVVQVIIPDSLGGDSCGSTPAAPL.

3 TPR repeats span residues 30–65, 81–116, and 118–150; these read LSQT…ITNS, FLAL…DAKD, and VLWN…SPNN. Residues 315–361 are disordered; the sequence is ERESGGSVKEKEPVFSEEHPQERRSTRLERLRNQKPEKEGLEFDNSK. TPR repeat units lie at residues 543–576, 602–637, 866–900, 955–988, 990–1009, 1011–1031, 1143–1183, 1226–1263, 1264–1297, 1306–1339, 1377–1412, and 1508–1541; these read ARYF…LGRE, IHEI…LAPL, INSP…EKNE, QCFF…DYQT, EQCV…SSRT, LVKL…PPDD, FESW…SQRV, VPFY…RQDW, SHAF…NPSA, ASRL…KDTA, EGVW…LAQG, and NSLR…SMSR. Basic and acidic residues predominate over residues 894–923; the sequence is VHVEKNENNKTESKKDGSEEQVGYREKEQS. Positions 894 to 941 are disordered; that stretch reads VHVEKNENNKTESKKDGSEEQVGYREKEQSEQQSKQIPEHTEEVAEEE. The tract at residues 1813 to 1840 is disordered; the sequence is KMKRGASTSSVVPSVQSGGTSEPEPAPK. Over residues 1818 to 1832 the composition is skewed to polar residues; that stretch reads ASTSSVVPSVQSGGT.

In terms of assembly, component of the HIRA complex made of UBN1, UBN2, ASF1A, CABIN1 and HIRA. Expressed at low levels in seedlings.

Its subcellular location is the nucleus. Functionally, may be required for replication-independent chromatin assembly. The protein is Calcineurin-binding protein 1 of Arabidopsis thaliana (Mouse-ear cress).